The primary structure comprises 155 residues: Pathogenesis-related protein STH-2 (155 aa).

It belongs to the BetVI family.

The polypeptide is Pathogenesis-related protein STH-2 (STH-2) (Solanum tuberosum (Potato)).